A 404-amino-acid chain; its full sequence is F-box protein At2g17036 (404 aa).

Residues M2–L50 enclose the F-box domain.

This chain is F-box protein At2g17036, found in Arabidopsis thaliana (Mouse-ear cress).